Here is a 115-residue protein sequence, read N- to C-terminus: Large ribosomal subunit protein bL19 (115 aa).

Belongs to the bacterial ribosomal protein bL19 family.

Functionally, this protein is located at the 30S-50S ribosomal subunit interface and may play a role in the structure and function of the aminoacyl-tRNA binding site. This chain is Large ribosomal subunit protein bL19, found in Oleidesulfovibrio alaskensis (strain ATCC BAA-1058 / DSM 17464 / G20) (Desulfovibrio alaskensis).